The chain runs to 320 residues: Malate dehydrogenase (320 aa).

Residues 10–15 (GSGMIG) and Asp34 each bind NAD(+). Residues Arg83 and Arg89 each contribute to the substrate site. NAD(+)-binding positions include Asn96 and 119 to 121 (ITN). Substrate contacts are provided by Asn121 and Arg152. His176 serves as the catalytic Proton acceptor.

This sequence belongs to the LDH/MDH superfamily. MDH type 3 family.

The enzyme catalyses (S)-malate + NAD(+) = oxaloacetate + NADH + H(+). Its function is as follows. Catalyzes the reversible oxidation of malate to oxaloacetate. The chain is Malate dehydrogenase from Bartonella quintana (strain Toulouse) (Rochalimaea quintana).